Consider the following 486-residue polypeptide: Probable transporter MCH1 (486 aa).

6 helical membrane passes run 31–51 (ISFF…LFSL), 69–89 (FIAS…GYLA), 91–111 (CYGP…SYFV), 132–152 (FGIC…SSLL), 164–184 (LAIS…SQLM), and 204–224 (FFGV…SVVS). The tract at residues 236-260 (EMEEADEESPLMTSRSRHSHHSCED) is disordered. A helical membrane pass occupies residues 280–300 (FINFLKDKSAWLLLASLILNI). Residue Asn322 is glycosylated (N-linked (GlcNAc...) asparagine). Transmembrane regions (helical) follow at residues 327–348 (VSIM…SDYL) and 357–377 (ICRV…QFMV). Asn390 is a glycosylation site (N-linked (GlcNAc...) asparagine). 2 helical membrane-spanning segments follow: residues 395–415 (GGLF…DMMG) and 417–437 (TWGS…IFYG). The N-linked (GlcNAc...) asparagine glycan is linked to Asn457. A helical transmembrane segment spans residues 458-478 (LTAVGLSVSLILIIIVWKGIW).

This sequence belongs to the major facilitator superfamily.

It localises to the vacuole membrane. Probable transporter. This chain is Probable transporter MCH1 (MCH1), found in Debaryomyces hansenii (strain ATCC 36239 / CBS 767 / BCRC 21394 / JCM 1990 / NBRC 0083 / IGC 2968) (Yeast).